The sequence spans 421 residues: 4-methylaminobutanoate oxidase (methylamine-forming) (421 aa).

4 residues coordinate FAD: Glu31, Arg33, Arg39, and Glu379.

It belongs to the flavin monoamine oxidase family. In terms of assembly, monomer. Requires FAD as cofactor.

The catalysed reaction is 4-(methylamino)butanoate + O2 + H2O = succinate semialdehyde + methylamine + H2O2. It functions in the pathway alkaloid degradation; nicotine degradation. Its function is as follows. Catalyzes the removal of methylamine from 4-methylaminobutanoate with the formation of succinate semialdehyde. Is involved in the catabolism of 4-methylaminobutanoate produced from nicotine. Has a very weak monoamine oxidase activity with 4-aminobutanoate. Cannot use spermidine, spermine, sarcosine, dimethylglycine, glycine, choline, betaine, alpha-methylamino isobutyrate, methylamine propionitrile and methylamino propylamine as substrate. In Paenarthrobacter nicotinovorans (Arthrobacter nicotinovorans), this protein is 4-methylaminobutanoate oxidase (methylamine-forming) (mao).